The following is a 45-amino-acid chain: Large ribosomal subunit protein bL34 (45 aa).

The disordered stretch occupies residues 1–27 (MTKRTLGGTSRKRKRVSGFRVRMRSHT). Residues 10-27 (SRKRKRVSGFRVRMRSHT) are compositionally biased toward basic residues.

It belongs to the bacterial ribosomal protein bL34 family.

The sequence is that of Large ribosomal subunit protein bL34 from Synechococcus sp. (strain CC9902).